The chain runs to 160 residues: UPF0479 membrane protein YER190C-B (160 aa).

2 helical membrane-spanning segments follow: residues 39–59 and 136–156; these read IVFC…KVLQ and VPMI…ISQH.

Belongs to the UPF0479 family.

Its subcellular location is the membrane. In Saccharomyces cerevisiae (strain ATCC 204508 / S288c) (Baker's yeast), this protein is UPF0479 membrane protein YER190C-B.